The primary structure comprises 404 residues: Cystinosin homolog (404 aa).

The Lumenal portion of the chain corresponds to 20–123; sequence TNNLVVRQKE…FARITVIRSH (104 aa). Asn46, Asn53, Asn79, and Asn97 each carry an N-linked (GlcNAc...) asparagine glycan. A helical transmembrane segment spans residues 124 to 144; sequence FLAILIQIVGWTYFFAWSISF. Residues 125–191 form the PQ-loop 1 domain; sequence LAILIQIVGW…MYYNSHVKNE (67 aa). The Cytoplasmic portion of the chain corresponds to 145–163; that stretch reads YPQMYLNFKRKSVVGLNFD. Residues 164–184 form a helical membrane-spanning segment; the sequence is FLSLNLVGFCAYAIFNLLMYY. The Lumenal portion of the chain corresponds to 185-207; it reads NSHVKNEYNIVNPRSPPPVLLND. The helical transmembrane segment at 208-228 threads the bilayer; it reads VVFAVHAFLACFITILQCLFY. At 229–238 the chain is on the cytoplasmic side; the sequence is ERDNQSVSSK. A helical membrane pass occupies residues 239-259; it reads CIALMIVLISFGFCSAAATVL. At 260–263 the chain is on the lumenal side; sequence RKIQ. The chain crosses the membrane as a helical span at residues 264-285; that stretch reads LLSFVTSLSYIKMAVTCCKYFP. In terms of domain architecture, PQ-loop 2 spans 266 to 327; the sequence is SFVTSLSYIK…MILQAVNVND (62 aa). The Cytoplasmic portion of the chain corresponds to 286-295; it reads QAYFNYTRKS. Residues 296–316 traverse the membrane as a helical segment; the sequence is TVGWSIGNIMLDFTGGTLDIL. Residues 317–337 lie on the Lumenal side of the membrane; that stretch reads QMILQAVNVNDWSAFYANPVK. Residues 338–358 form a helical membrane-spanning segment; that stretch reads FGLGFVSIFFDIIFMVQHYVL. Over 359-404 the chain is Cytoplasmic; it reads YPNAEVPHNEYHGVDNPNPDNIARDAEQYAGDSESMESTEPIIVHD.

The protein belongs to the cystinosin family.

It is found in the lysosome membrane. The protein localises to the cytoplasmic vesicle. It localises to the phagosome. It carries out the reaction L-cystine(out) + H(+)(out) = L-cystine(in) + H(+)(in). Its function is as follows. Cystine/H(+) symporter that mediates export of cystine, the oxidized dimer of cysteine, from lysosomes. May play a role in the degradation of engulfed apoptotic cells. The protein is Cystinosin homolog (ctns-1) of Caenorhabditis elegans.